The primary structure comprises 225 residues: NAD(P)H-quinone oxidoreductase subunit K, chloroplastic (225 aa).

[4Fe-4S] cluster is bound by residues C43, C44, C108, and C139.

The protein belongs to the complex I 20 kDa subunit family. In terms of assembly, NDH is composed of at least 16 different subunits, 5 of which are encoded in the nucleus. [4Fe-4S] cluster serves as cofactor.

It is found in the plastid. The protein resides in the chloroplast thylakoid membrane. The catalysed reaction is a plastoquinone + NADH + (n+1) H(+)(in) = a plastoquinol + NAD(+) + n H(+)(out). It catalyses the reaction a plastoquinone + NADPH + (n+1) H(+)(in) = a plastoquinol + NADP(+) + n H(+)(out). NDH shuttles electrons from NAD(P)H:plastoquinone, via FMN and iron-sulfur (Fe-S) centers, to quinones in the photosynthetic chain and possibly in a chloroplast respiratory chain. The immediate electron acceptor for the enzyme in this species is believed to be plastoquinone. Couples the redox reaction to proton translocation, and thus conserves the redox energy in a proton gradient. The polypeptide is NAD(P)H-quinone oxidoreductase subunit K, chloroplastic (Fagopyrum esculentum subsp. ancestrale (Wild buckwheat)).